A 198-amino-acid chain; its full sequence is Glutamyl-tRNA(Gln) amidotransferase subunit C, mitochondrial (198 aa).

The protein belongs to the GatC family. As to quaternary structure, subunit of the heterotrimeric GatCAB amidotransferase (AdT) complex, composed of A, B and C subunits.

The protein resides in the mitochondrion. It carries out the reaction L-glutamyl-tRNA(Gln) + L-glutamine + ATP + H2O = L-glutaminyl-tRNA(Gln) + L-glutamate + ADP + phosphate + H(+). Its function is as follows. Allows the formation of correctly charged Gln-tRNA(Gln) through the transamidation of misacylated Glu-tRNA(Gln) in the mitochondria. The reaction takes place in the presence of glutamine and ATP through an activated gamma-phospho-Glu-tRNA(Gln). In Caenorhabditis remanei (Caenorhabditis vulgaris), this protein is Glutamyl-tRNA(Gln) amidotransferase subunit C, mitochondrial.